A 259-amino-acid polypeptide reads, in one-letter code: Isoprenyl transferase (259 aa).

Residue Asp-30 is part of the active site. Asp-30 is a Mg(2+) binding site. Substrate is bound by residues 31–34 (GNGR), Trp-35, Arg-43, His-47, and 75–77 (STE). Asn-78 serves as the catalytic Proton acceptor. Substrate is bound by residues Trp-79, Arg-81, Arg-198, and 204–206 (RIS). Glu-217 is a Mg(2+) binding site.

It belongs to the UPP synthase family. In terms of assembly, homodimer. Mg(2+) is required as a cofactor.

Catalyzes the condensation of isopentenyl diphosphate (IPP) with allylic pyrophosphates generating different type of terpenoids. The sequence is that of Isoprenyl transferase from Caulobacter vibrioides (strain ATCC 19089 / CIP 103742 / CB 15) (Caulobacter crescentus).